Here is a 235-residue protein sequence, read N- to C-terminus: MAVVTLSEMMEAGAHFGHQTRRWNPKMQRYIHCARNGVHIIDLVQTAVCMNNAYKWVRSAARSGKRFLFVGTKKQAAEVVALEASRCGASYVNQRWLGGMLTNWSTMRARIERLKDLERMESSGAIAMRPKKEASVLRRELDRLQKYLGGLKNMRRLPDVVVLIDQKREYNAVLECQKLDIPVVSMLDTNCDPDLCDVPIPCNDDAVRSVQLIIGRLADAINEGRHGSNDQGDEG.

The protein belongs to the universal ribosomal protein uS2 family.

This is Small ribosomal subunit protein uS2 from Synechococcus sp. (strain RCC307).